The following is a 257-amino-acid chain: UPF0246 protein YaaA (257 aa).

Belongs to the UPF0246 family.

This chain is UPF0246 protein YaaA, found in Salmonella agona (strain SL483).